Here is a 468-residue protein sequence, read N- to C-terminus: MRAQWIARRHGQPNVTQMHHARRGSVTEEMAHVAAREKLDPELVRQEVARGRMVIPANLKHPELEPIAIGIAATCKINANIGNSAVTSDVDEELRKLSVCLRHGADTVMDLSTGGDIPLIRENILRHSPIPVGTVPIYECLAHVKDVVDLTPRGLLEIIEAQAAQGVDYMTIHAGVLRDIVPMAAGRITGIVSRGGALLARWMAANGQENPLYTHFDEICEIFKRYDVTFSLGDGLRPGCLADASDEAQFAELKVLGELTRKAWAHDVQVMVEGPGHVPLDQIPMNMQKERELCDEAPFYVLGPLVTDIAPGYDHITSAIGAAVAAQHGASMLCYVTPAEHLGLPDAEDVRQGIVAYKIAAHAADVARQRPGARDRDDALSRARYAFDWKRQFELSLDPDAARTKHDATLPQEAAKSAEFCSMCGPKFCSMRIHSHLGDGAAPGAALPCADAAPSQPTRAGGPLPIAR.

Substrate is bound by residues Asn-80, Met-109, Tyr-138, His-173, 193–195, 234–237, and Glu-273; these read SRG and DGLR. His-277 is a binding site for Zn(2+). Tyr-300 contacts substrate. Zn(2+) is bound at residue His-341. [4Fe-4S] cluster-binding residues include Cys-421, Cys-424, and Cys-429.

The protein belongs to the ThiC family. As to quaternary structure, homodimer. The cofactor is [4Fe-4S] cluster.

The catalysed reaction is 5-amino-1-(5-phospho-beta-D-ribosyl)imidazole + S-adenosyl-L-methionine = 4-amino-2-methyl-5-(phosphooxymethyl)pyrimidine + CO + 5'-deoxyadenosine + formate + L-methionine + 3 H(+). Its pathway is cofactor biosynthesis; thiamine diphosphate biosynthesis. Its function is as follows. Catalyzes the synthesis of the hydroxymethylpyrimidine phosphate (HMP-P) moiety of thiamine from aminoimidazole ribotide (AIR) in a radical S-adenosyl-L-methionine (SAM)-dependent reaction. The chain is Phosphomethylpyrimidine synthase from Anaeromyxobacter sp. (strain Fw109-5).